The sequence spans 289 residues: Polyisoprenoid diphosphate/phosphate phosphohydrolase PLPP6 (289 aa).

Residues 1–81 form a disordered region; it reads MQSPRRNAEG…SSQALPPQLP (81 aa). The Cytoplasmic portion of the chain corresponds to 1-126; the sequence is MQSPRRNAEG…ESSSWGSMRP (126 aa). Residues Ser-23, Ser-30, and Ser-64 each carry the phosphoserine modification. The chain crosses the membrane as a helical span at residues 127-147; sequence LMKLLEISGHGIPWLLGTLYC. Over 148–158 the chain is Lumenal; that stretch reads LSRSDSWAGRE. A helical transmembrane segment spans residues 159 to 179; it reads VLMNLLFALLLDLLLVSLIKG. Residues 178–186 form a phosphatase sequence motif I region; it reads KGLVRRRRP. Topologically, residues 180–222 are cytoplasmic; that stretch reads LVRRRRPAHNQMDMFFTISVDKYSFPSGHTTRAALVSRFILNH. Residues 205–208 form a phosphatase sequence motif II region; it reads PSGH. Residue His-208 is the Proton donors of the active site. A helical transmembrane segment spans residues 223–243; that stretch reads LVLAIPLRVLVVLWAFILGLS. The phosphatase sequence motif III stretch occupies residues 243–254; the sequence is SRVMLGRHNVTD. Residues 244-254 are Lumenal-facing; that stretch reads RVMLGRHNVTD. His-250 functions as the Nucleophile in the catalytic mechanism. Residues 255-275 form a helical membrane-spanning segment; the sequence is VAFGFFLGYMQYSIVDYCWLS. At 276–289 the chain is on the cytoplasmic side; that stretch reads PRTAPVLFVLWNQP.

The protein belongs to the PA-phosphatase related phosphoesterase family. Phosphorylation by PKC activates the phosphatase activity towards presqualene diphosphate.

The protein localises to the endoplasmic reticulum membrane. The protein resides in the nucleus envelope. Its subcellular location is the nucleus inner membrane. It carries out the reaction presqualene diphosphate + H2O = presqualene phosphate + phosphate + H(+). It catalyses the reaction presqualene phosphate + H2O = presqualene alcohol + phosphate. The catalysed reaction is (2E,6E)-farnesyl diphosphate + H2O = (2E,6E)-farnesyl phosphate + phosphate + H(+). The enzyme catalyses (2E,6E)-farnesyl phosphate + H2O = (2E,6E)-farnesol + phosphate. It carries out the reaction (2E,6E,10E)-geranylgeranyl diphosphate + H2O = (2E,6E,10E)-geranylgeranyl phosphate + phosphate + H(+). It catalyses the reaction (2E,6E,10E)-geranylgeranyl phosphate + H2O = (2E,6E,10E)-geranylgeraniol + phosphate. The catalysed reaction is (2E)-geranyl diphosphate + H2O = (2E)-geranyl phosphate + phosphate + H(+). The enzyme catalyses (2E)-geranyl phosphate + H2O = (2E)-geraniol + phosphate. It carries out the reaction 1,2-dihexadecanoyl-sn-glycero-3-phosphate + H2O = 1,2-dihexadecanoyl-sn-glycerol + phosphate. Magnesium-independent polyisoprenoid diphosphatase that catalyzes the sequential dephosphorylation of presqualene, farnesyl, geranyl and geranylgeranyl diphosphates. Functions in the innate immune response through the dephosphorylation of presqualene diphosphate which acts as a potent inhibitor of the signaling pathways contributing to polymorphonuclear neutrophils activation. May regulate the biosynthesis of cholesterol and related sterols by dephosphorylating presqualene and farnesyl diphosphate, two key intermediates in this biosynthetic pathway. May also play a role in protein prenylation by acting on farnesyl diphosphate and its derivative geranylgeranyl diphosphate, two precursors for the addition of isoprenoid anchors to membrane proteins. Has a lower activity towards phosphatidic acid (PA), but through phosphatidic acid dephosphorylation may participate in the biosynthesis of phospholipids and triacylglycerols. May also act on ceramide-1-P, lysophosphatidic acid (LPA) and sphing-4-enine 1-phosphate/sphingosine-1-phosphate. This is Polyisoprenoid diphosphate/phosphate phosphohydrolase PLPP6 from Bos taurus (Bovine).